A 324-amino-acid polypeptide reads, in one-letter code: tRNA U34 carboxymethyltransferase (324 aa).

Residues lysine 91, tryptophan 105, lysine 110, glycine 130, 152–154, 181–182, methionine 196, tyrosine 200, and arginine 315 each bind carboxy-S-adenosyl-L-methionine; these read DPS and IE.

The protein belongs to the class I-like SAM-binding methyltransferase superfamily. CmoB family. Homotetramer.

It catalyses the reaction carboxy-S-adenosyl-L-methionine + 5-hydroxyuridine(34) in tRNA = 5-carboxymethoxyuridine(34) in tRNA + S-adenosyl-L-homocysteine + H(+). Its function is as follows. Catalyzes carboxymethyl transfer from carboxy-S-adenosyl-L-methionine (Cx-SAM) to 5-hydroxyuridine (ho5U) to form 5-carboxymethoxyuridine (cmo5U) at position 34 in tRNAs. This Aliivibrio fischeri (strain ATCC 700601 / ES114) (Vibrio fischeri) protein is tRNA U34 carboxymethyltransferase.